Here is a 504-residue protein sequence, read N- to C-terminus: ATP-dependent rRNA helicase RRP3 (504 aa).

Residues 34 to 62 (ASASSAASTKESLPVSETISISTSETPVS) are compositionally biased toward low complexity. A disordered region spans residues 34-99 (ASASSAASTK…SSSSPPSVQS (66 aa)). Over residues 68–79 (SNKEDLSTKKDQ) the composition is skewed to basic and acidic residues. Over residues 80-99 (SSASSSSSTSSSSSPPSVQS) the composition is skewed to low complexity. Residues 98–126 (QSFTEFDLVPELLESIQSLKYTQPTPIQA) carry the Q motif motif. In terms of domain architecture, Helicase ATP-binding spans 129–301 (IPHALQGKDI…RSLNSPVQVE (173 aa)). 142 to 149 (AETGSGKT) is an ATP binding site. The short motif at 248-251 (DEVD) is the DEAD box element. Positions 327-471 (RLIQIVNLDS…DLPLDEMQGL (145 aa)) constitute a Helicase C-terminal domain.

The protein belongs to the DEAD box helicase family. DDX47/RRP3 subfamily. As to quaternary structure, interacts with the SSU processome.

Its subcellular location is the nucleus. The catalysed reaction is ATP + H2O = ADP + phosphate + H(+). Its function is as follows. ATP-dependent rRNA helicase required for pre-ribosomal RNA processing. Involved in the maturation of the 35S-pre-rRNA and to its cleavage to mature 18S rRNA. This Lodderomyces elongisporus (strain ATCC 11503 / CBS 2605 / JCM 1781 / NBRC 1676 / NRRL YB-4239) (Yeast) protein is ATP-dependent rRNA helicase RRP3.